A 377-amino-acid polypeptide reads, in one-letter code: Succinyl-diaminopimelate desuccinylase (377 aa).

His-67 serves as a coordination point for Zn(2+). The active site involves Asp-69. Asp-100 lines the Zn(2+) pocket. Catalysis depends on Glu-134, which acts as the Proton acceptor. Residues Glu-135, Glu-163, and His-349 each contribute to the Zn(2+) site.

This sequence belongs to the peptidase M20A family. DapE subfamily. As to quaternary structure, homodimer. Zn(2+) serves as cofactor. It depends on Co(2+) as a cofactor.

It catalyses the reaction N-succinyl-(2S,6S)-2,6-diaminopimelate + H2O = (2S,6S)-2,6-diaminopimelate + succinate. Its pathway is amino-acid biosynthesis; L-lysine biosynthesis via DAP pathway; LL-2,6-diaminopimelate from (S)-tetrahydrodipicolinate (succinylase route): step 3/3. In terms of biological role, catalyzes the hydrolysis of N-succinyl-L,L-diaminopimelic acid (SDAP), forming succinate and LL-2,6-diaminopimelate (DAP), an intermediate involved in the bacterial biosynthesis of lysine and meso-diaminopimelic acid, an essential component of bacterial cell walls. The polypeptide is Succinyl-diaminopimelate desuccinylase (Actinobacillus pleuropneumoniae serotype 5b (strain L20)).